The sequence spans 345 residues: Ferrochelatase (345 aa).

Positions 215 and 296 each coordinate Fe cation.

The protein belongs to the ferrochelatase family.

It localises to the cytoplasm. It catalyses the reaction heme b + 2 H(+) = protoporphyrin IX + Fe(2+). The protein operates within porphyrin-containing compound metabolism; protoheme biosynthesis; protoheme from protoporphyrin-IX: step 1/1. Its function is as follows. Catalyzes the ferrous insertion into protoporphyrin IX. The sequence is that of Ferrochelatase from Rhodopseudomonas palustris (strain BisB5).